Reading from the N-terminus, the 593-residue chain is SPI-1 type 3 secretion system translocon protein SctE (593 aa).

Coiled coils occupy residues 151-208 and 287-314; these read DTAK…ATDA and EGRQ…NRIM. 2 helical membrane passes run 330–350 and 409–429; these read VVAA…GLAV and IVGA…VAVV.

Belongs to the SctE/SipB/YopB family. In terms of assembly, the core secretion machinery of the T3SS is composed of approximately 20 different proteins, including cytoplasmic components, a base, an export apparatus and a needle. This subunit is involved in the formation of a pore, called the translocon, in host membrane.

The protein resides in the secreted. It is found in the host membrane. Component of the type III secretion system 1 (SPI-1 T3SS), also called injectisome, which is used to inject bacterial effector proteins into eukaryotic host cells. SipB/SctE1 and SipC/SctB are inserted into the host membrane where they form a pore and allow the translocation of effector proteins into the cytosol of target cells. This chain is SPI-1 type 3 secretion system translocon protein SctE, found in Salmonella dublin.